We begin with the raw amino-acid sequence, 201 residues long: Dephospho-CoA kinase (201 aa).

Residues 4 to 201 form the DPCK domain; the sequence is SVGLTGNIAS…KYLREAKIKQ (198 aa). ATP is bound at residue 12–17; it reads ASGKST.

The protein belongs to the CoaE family.

Its subcellular location is the cytoplasm. It carries out the reaction 3'-dephospho-CoA + ATP = ADP + CoA + H(+). It participates in cofactor biosynthesis; coenzyme A biosynthesis; CoA from (R)-pantothenate: step 5/5. Its function is as follows. Catalyzes the phosphorylation of the 3'-hydroxyl group of dephosphocoenzyme A to form coenzyme A. The protein is Dephospho-CoA kinase of Legionella pneumophila subsp. pneumophila (strain Philadelphia 1 / ATCC 33152 / DSM 7513).